Consider the following 741-residue polypeptide: Ethylene receptor 2 (741 aa).

3 helical membrane passes run Ile23–Val43, Trp53–Leu73, and Ile92–Leu112. The Cu cation site is built by Cys65 and His69. Residues Asp158 to Leu307 enclose the GAF domain. Residues Val350 to Glu589 form the Histidine kinase domain. Position 353 is a phosphohistidine; by autocatalysis (His353). The Response regulatory domain maps to Lys615–Leu732. Asp663 bears the 4-aspartylphosphate mark.

It belongs to the ethylene receptor family. Homodimer; disulfide-linked. Cu cation is required as a cofactor. Activation probably requires a transfer of a phosphate group between a His in the transmitter domain and an Asp of the receiver domain.

The protein resides in the endoplasmic reticulum membrane. The enzyme catalyses ATP + protein L-histidine = ADP + protein N-phospho-L-histidine.. Its function is as follows. May act early in the ethylene signal transduction pathway, possibly as an ethylene receptor, or as a regulator of the pathway. This is Ethylene receptor 2 (ETR2) from Pelargonium hortorum (Common geranium).